Consider the following 231-residue polypeptide: Endonuclease NucS (231 aa).

Belongs to the NucS endonuclease family.

The protein resides in the cytoplasm. Its function is as follows. Cleaves both 3' and 5' ssDNA extremities of branched DNA structures. The protein is Endonuclease NucS of Micrococcus luteus (strain ATCC 4698 / DSM 20030 / JCM 1464 / CCM 169 / CCUG 5858 / IAM 1056 / NBRC 3333 / NCIMB 9278 / NCTC 2665 / VKM Ac-2230) (Micrococcus lysodeikticus).